The chain runs to 466 residues: Glutamate--tRNA ligase 2 (466 aa).

Positions Pro-9–Gly-19 match the 'HIGH' region motif. Residues Pro-234–Arg-238 carry the 'KMSKS' region motif. Lys-237 is a binding site for ATP.

The protein belongs to the class-I aminoacyl-tRNA synthetase family. Glutamate--tRNA ligase type 1 subfamily. Monomer.

It localises to the cytoplasm. The catalysed reaction is tRNA(Glu) + L-glutamate + ATP = L-glutamyl-tRNA(Glu) + AMP + diphosphate. Catalyzes the attachment of glutamate to tRNA(Glu) in a two-step reaction: glutamate is first activated by ATP to form Glu-AMP and then transferred to the acceptor end of tRNA(Glu). This Pseudothermotoga lettingae (strain ATCC BAA-301 / DSM 14385 / NBRC 107922 / TMO) (Thermotoga lettingae) protein is Glutamate--tRNA ligase 2.